The chain runs to 346 residues: Hydroxymethylglutaryl-CoA synthase (346 aa).

D28 contacts (3S)-3-hydroxy-3-methylglutaryl-CoA. The active-site Proton donor/acceptor is E80. (3S)-3-hydroxy-3-methylglutaryl-CoA-binding residues include C112 and T153. The active-site Acyl-thioester intermediate is C112. Position 199 (R199) interacts with CoA. The (3S)-3-hydroxy-3-methylglutaryl-CoA site is built by T201 and H234. The Proton donor/acceptor role is filled by H234. K239 contacts CoA. (3S)-3-hydroxy-3-methylglutaryl-CoA is bound by residues K243, N266, and S296.

It belongs to the thiolase-like superfamily. Archaeal HMG-CoA synthase family. As to quaternary structure, interacts with acetoacetyl-CoA thiolase that catalyzes the precedent step in the pathway and with a DUF35 protein. The acetoacetyl-CoA thiolase/HMG-CoA synthase complex channels the intermediate via a fused CoA-binding site, which allows for efficient coupling of the endergonic thiolase reaction with the exergonic HMGCS reaction.

The enzyme catalyses acetoacetyl-CoA + acetyl-CoA + H2O = (3S)-3-hydroxy-3-methylglutaryl-CoA + CoA + H(+). The protein operates within metabolic intermediate biosynthesis; (R)-mevalonate biosynthesis; (R)-mevalonate from acetyl-CoA: step 2/3. Functionally, catalyzes the condensation of acetyl-CoA with acetoacetyl-CoA to form 3-hydroxy-3-methylglutaryl-CoA (HMG-CoA). Functions in the mevalonate (MVA) pathway leading to isopentenyl diphosphate (IPP), a key precursor for the biosynthesis of isoprenoid compounds that are building blocks of archaeal membrane lipids. This is Hydroxymethylglutaryl-CoA synthase from Methanothermobacter thermautotrophicus (strain ATCC 29096 / DSM 1053 / JCM 10044 / NBRC 100330 / Delta H) (Methanobacterium thermoautotrophicum).